Consider the following 243-residue polypeptide: Probable transcriptional regulatory protein BDI_1233 (243 aa).

The protein belongs to the TACO1 family.

It localises to the cytoplasm. The chain is Probable transcriptional regulatory protein BDI_1233 from Parabacteroides distasonis (strain ATCC 8503 / DSM 20701 / CIP 104284 / JCM 5825 / NCTC 11152).